The chain runs to 419 residues: S-adenosylmethionine synthase (419 aa).

An ATP-binding site is contributed by His-14. Asp-16 is a Mg(2+) binding site. Glu-42 provides a ligand contact to K(+). Positions 55 and 98 each coordinate L-methionine. Positions 98-108 (QSADINQGVDR) are flexible loop. ATP contacts are provided by residues 164 to 166 (DAK), 242 to 243 (KF), Asp-251, 257 to 258 (RK), Ala-274, and Lys-278. Asp-251 provides a ligand contact to L-methionine. Lys-282 is an L-methionine binding site.

It belongs to the AdoMet synthase family. As to quaternary structure, homotetramer; dimer of dimers. Requires Mg(2+) as cofactor. K(+) serves as cofactor.

The protein resides in the cytoplasm. It catalyses the reaction L-methionine + ATP + H2O = S-adenosyl-L-methionine + phosphate + diphosphate. It functions in the pathway amino-acid biosynthesis; S-adenosyl-L-methionine biosynthesis; S-adenosyl-L-methionine from L-methionine: step 1/1. Its function is as follows. Catalyzes the formation of S-adenosylmethionine (AdoMet) from methionine and ATP. The overall synthetic reaction is composed of two sequential steps, AdoMet formation and the subsequent tripolyphosphate hydrolysis which occurs prior to release of AdoMet from the enzyme. The sequence is that of S-adenosylmethionine synthase from Cytophaga hutchinsonii (strain ATCC 33406 / DSM 1761 / CIP 103989 / NBRC 15051 / NCIMB 9469 / D465).